A 285-amino-acid chain; its full sequence is Shikimate dehydrogenase (NADP(+)) (285 aa).

Residues 19–21 (SLS) and Thr-66 each bind shikimate. The active-site Proton acceptor is the Lys-70. Asn-91 and Asp-107 together coordinate shikimate. NADP(+)-binding positions include 129 to 133 (GSGGA) and Leu-228. Position 230 (Tyr-230) interacts with shikimate. An NADP(+)-binding site is contributed by Gly-251.

The protein belongs to the shikimate dehydrogenase family. Homodimer.

The enzyme catalyses shikimate + NADP(+) = 3-dehydroshikimate + NADPH + H(+). Its pathway is metabolic intermediate biosynthesis; chorismate biosynthesis; chorismate from D-erythrose 4-phosphate and phosphoenolpyruvate: step 4/7. Involved in the biosynthesis of the chorismate, which leads to the biosynthesis of aromatic amino acids. Catalyzes the reversible NADPH linked reduction of 3-dehydroshikimate (DHSA) to yield shikimate (SA). This Prochlorococcus marinus (strain MIT 9515) protein is Shikimate dehydrogenase (NADP(+)).